A 274-amino-acid polypeptide reads, in one-letter code: Thiazole synthase (274 aa).

The active-site Schiff-base intermediate with DXP is K115. Residues G176, 202–203, and 224–225 each bind 1-deoxy-D-xylulose 5-phosphate; these read AG and NS.

The protein belongs to the ThiG family. As to quaternary structure, homotetramer. Forms heterodimers with either ThiH or ThiS.

Its subcellular location is the cytoplasm. It catalyses the reaction [ThiS sulfur-carrier protein]-C-terminal-Gly-aminoethanethioate + 2-iminoacetate + 1-deoxy-D-xylulose 5-phosphate = [ThiS sulfur-carrier protein]-C-terminal Gly-Gly + 2-[(2R,5Z)-2-carboxy-4-methylthiazol-5(2H)-ylidene]ethyl phosphate + 2 H2O + H(+). It functions in the pathway cofactor biosynthesis; thiamine diphosphate biosynthesis. Its function is as follows. Catalyzes the rearrangement of 1-deoxy-D-xylulose 5-phosphate (DXP) to produce the thiazole phosphate moiety of thiamine. Sulfur is provided by the thiocarboxylate moiety of the carrier protein ThiS. In vitro, sulfur can be provided by H(2)S. This chain is Thiazole synthase, found in Psychrobacter arcticus (strain DSM 17307 / VKM B-2377 / 273-4).